Consider the following 178-residue polypeptide: Large ribosomal subunit protein bL25 (178 aa).

The protein belongs to the bacterial ribosomal protein bL25 family. CTC subfamily. As to quaternary structure, part of the 50S ribosomal subunit; part of the 5S rRNA/L5/L18/L25 subcomplex. Contacts the 5S rRNA. Binds to the 5S rRNA independently of L5 and L18.

Its function is as follows. This is one of the proteins that binds to the 5S RNA in the ribosome where it forms part of the central protuberance. The polypeptide is Large ribosomal subunit protein bL25 (Helicobacter acinonychis (strain Sheeba)).